Here is a 614-residue protein sequence, read N- to C-terminus: Heat shock protein SSB1 (614 aa).

The tract at residues M1–E392 is nucleotide binding domain (NBD). ATP is bound by residues T16 to Y18, K74, G206 to T208, E272 to S279, and G343. The segment at T393–P403 is inter-domain linker. Residues L404–R614 form a substrate binding domain (SBD) region. The segment at T517–S613 is lid domain (SBDalpha). Positions I575–M583 match the Nuclear export signal motif.

It belongs to the heat shock protein 70 family. Interacts with HAT1 in starvation conditions.

The protein localises to the nucleus. It is found in the cytoplasm. It catalyses the reaction ATP + H2O = ADP + phosphate + H(+). Functionally, chaperone that interacts with the histone acetyltransferase HAT1 and mediates its translocation from the nucleus to the cytoplasm during germination and starvation conditions. Within the cytoplasm, HAT1 regulates autophagy via acetylation of the autophagy-related proteins ATG3 and ATG9. The protein is Heat shock protein SSB1 of Pyricularia oryzae (strain 70-15 / ATCC MYA-4617 / FGSC 8958) (Rice blast fungus).